The following is a 107-amino-acid chain: Thioredoxin (107 aa).

Residues 2–107 enclose the Thioredoxin domain; sequence SVEAVVKQVD…GIRELIQANA (106 aa). Catalysis depends on nucleophile residues cysteine 34 and cysteine 37. Cysteine 34 and cysteine 37 are joined by a disulfide.

Belongs to the thioredoxin family.

Functionally, participates in various redox reactions through the reversible oxidation of its active center dithiol to a disulfide and catalyzes dithiol-disulfide exchange reactions. This chain is Thioredoxin (TRX), found in Echinococcus granulosus (Hydatid tapeworm).